Consider the following 122-residue polypeptide: Large ribosomal subunit protein uL14 (122 aa).

It belongs to the universal ribosomal protein uL14 family. As to quaternary structure, part of the 50S ribosomal subunit. Forms a cluster with proteins L3 and L19. In the 70S ribosome, L14 and L19 interact and together make contacts with the 16S rRNA in bridges B5 and B8.

Binds to 23S rRNA. Forms part of two intersubunit bridges in the 70S ribosome. In Xylella fastidiosa (strain M23), this protein is Large ribosomal subunit protein uL14.